Consider the following 86-residue polypeptide: MISAVILFLLLLVEQAAALGEPQLCYILDAVLFLYGIVLTLLYCRLKIQVRKAAIASREKADAVYTGLNTRSQETYETLKHEKPPQ.

Positions 1 to 18 (MISAVILFLLLLVEQAAA) are cleaved as a signal peptide. The Extracellular segment spans residues 19-23 (LGEPQ). A helical transmembrane segment spans residues 24–44 (LCYILDAVLFLYGIVLTLLYC). The Cytoplasmic segment spans residues 45–86 (RLKIQVRKAAIASREKADAVYTGLNTRSQETYETLKHEKPPQ). One can recognise an ITAM domain in the interval 54 to 82 (AIASREKADAVYTGLNTRSQETYETLKHE). 2 positions are modified to phosphotyrosine: Tyr-65 and Tyr-76. Thr-78 carries the post-translational modification Phosphothreonine.

The protein belongs to the CD3Z/FCER1G family. As to quaternary structure, igE Fc receptor is a tetramer of an alpha chain, a beta chain, and two disulfide linked gamma chains. Associates with FCGR1A; forms a functional signaling complex. The signaling subunit of immunoglobulin gamma (IgG) Fc receptor complex. As a homodimer or a heterodimer of CD247 and FCER1G, associates with the ligand binding subunit FCGR3A to form a functional receptor complex. Associates with CLEC6A. Interacts with CLEC4E. Interacts (via ITAM domain) with SYK (via SH2 domains); activates SYK, enabling integrin-mediated activation of neutrophils and macrophages. Interacts with CSF2RB and recruits SYK in response to IL3 stimulation; this interaction is direct. Interacts with CD300LH; the interaction may be indirect. Interacts with CD300LD. Interacts with TARM1. As to expression, expressed in mast cells (at protein level). Expressed in basophils (at protein level).

The protein resides in the cell membrane. Its function is as follows. Adapter protein containing an immunoreceptor tyrosine-based activation motif (ITAM) that transduces activation signals from various immunoreceptors. As a component of the high-affinity immunoglobulin E (IgE) receptor, mediates allergic inflammatory signaling in mast cells. As a constitutive component of interleukin-3 receptor complex, selectively mediates interleukin 4/IL4 production by basophils, priming T-cells toward effector T-helper 2 subset. Associates with pattern recognition receptors CLEC4D and CLEC4E to form a functional signaling complex in myeloid cells. Binding of mycobacterial trehalose 6,6'-dimycolate (TDM) to this receptor complex leads to phosphorylation of ITAM, triggering activation of SYK, CARD9 and NF-kappa-B, consequently driving maturation of antigen-presenting cells and shaping antigen-specific priming of T-cells toward effector T-helper 1 and T-helper 17 cell subtypes. May function cooperatively with other activating receptors. Functionally linked to integrin beta-2/ITGB2-mediated neutrophil activation. Also involved in integrin alpha-2/ITGA2-mediated platelet activation. This chain is High affinity immunoglobulin epsilon receptor subunit gamma, found in Mus musculus (Mouse).